Here is a 38-residue protein sequence, read N- to C-terminus: Photosystem II reaction center protein L (38 aa).

A helical transmembrane segment spans residues 17–37 (SLYWGLLLIFVLAVLFSSYIF).

This sequence belongs to the PsbL family. PSII is composed of 1 copy each of membrane proteins PsbA, PsbB, PsbC, PsbD, PsbE, PsbF, PsbH, PsbI, PsbJ, PsbK, PsbL, PsbM, PsbT, PsbX, PsbY, PsbZ, Psb30/Ycf12, at least 3 peripheral proteins of the oxygen-evolving complex and a large number of cofactors. It forms dimeric complexes.

The protein localises to the plastid. It localises to the chloroplast thylakoid membrane. One of the components of the core complex of photosystem II (PSII). PSII is a light-driven water:plastoquinone oxidoreductase that uses light energy to abstract electrons from H(2)O, generating O(2) and a proton gradient subsequently used for ATP formation. It consists of a core antenna complex that captures photons, and an electron transfer chain that converts photonic excitation into a charge separation. This subunit is found at the monomer-monomer interface and is required for correct PSII assembly and/or dimerization. This Tetradesmus obliquus (Green alga) protein is Photosystem II reaction center protein L.